A 100-amino-acid chain; its full sequence is MGSRFLLALFLVLLVLGCEVQAAQQLQQDDPGSPALLDKVQESISSYWDTAKAAAQGLYQKTYLTSVDEKLRDMYSKSSAAMTTYASIFTDQIFTLLKGE.

The signal sequence occupies residues 1–22; that stretch reads MGSRFLLALFLVLLVLGCEVQA. The lipid binding stretch occupies residues 66–74; sequence SVDEKLRDM. The lipoprotein lipase cofactor stretch occupies residues 78 to 100; the sequence is SSAAMTTYASIFTDQIFTLLKGE.

Belongs to the apolipoprotein C2 family. Post-translationally, proapolipoprotein C-II is synthesized as a sialic acid containing glycoprotein which is subsequently desialylated prior to its proteolytic processing. Proapolipoprotein C-II, the major form found in plasma undergoes proteolytic cleavage of its N-terminal hexapeptide to generate the mature form apolipoprotein C-II, which occurs as the minor form in plasma.

The protein localises to the secreted. Functionally, component of chylomicrons, very low-density lipoproteins (VLDL), low-density lipoproteins (LDL), and high-density lipoproteins (HDL) in plasma. Plays an important role in lipoprotein metabolism as an activator of lipoprotein lipase. The chain is Apolipoprotein C-II (APOC2) from Bramus lutescens (Transcaucasian mole vole).